The primary structure comprises 937 residues: Protocadherin alpha-7 (937 aa).

A signal peptide spans 1–29 (MVCPNGYDPGGRHLLLFIIILAAWEAGRG). Cadherin domains are found at residues 30 to 133 (QLHY…PPVF), 134 to 242 (PATQ…APVF), 243 to 350 (DRTL…APQL), 351 to 455 (TLTS…APAF), 456 to 565 (AQPE…APAL), and 581 to 678 (VPRS…APKA). Residues 30-697 (QLHYSVPEEA…GPETELVDVN (668 aa)) are Extracellular-facing. Cys96 and Cys102 form a disulfide bridge. Residues Asn254 and Asn265 are each glycosylated (N-linked (GlcNAc...) asparagine). An N-linked (GlcNAc...) asparagine glycan is attached at Asn548. Residues 698–718 (VYLIIAICAVSSLLVLTLLLY) traverse the membrane as a helical segment. Over 719 to 937 (TALRCSAPSS…GNSTTDNSDQ (219 aa)) the chain is Cytoplasmic. 2 disordered regions span residues 756–795 (QRVC…DWRY) and 817–843 (AGPG…EVSP). 5 PXXP repeats span residues 774 to 777 (PSLP), 786 to 789 (PRQP), 819 to 822 (PGGP), 860 to 863 (PGNP), and 878 to 881 (PGSP). Residues 774–881 (PSLPQGPSST…PDKFIIPGSP (108 aa)) form a 5 X 4 AA repeats of P-X-X-P region. A compositionally biased stretch (polar residues) spans 775–787 (SLPQGPSSTDNPR). The tract at residues 888-937 (QEPANSQIDKSDFITFGKKEETKKKKKKKKGNKTQEKKEKGNSTTDNSDQ) is disordered. Over residues 896-910 (DKSDFITFGKKEETK) the composition is skewed to basic and acidic residues.

As to quaternary structure, forms homodimers in trans (molecules expressed by two different cells). Forms promiscuous heterodimers in cis (at the plasma membrane of the same cell) with other protocadherins.

It localises to the cell membrane. Its function is as follows. Calcium-dependent cell-adhesion protein involved in cells self-recognition and non-self discrimination. Thereby, it is involved in the establishment and maintenance of specific neuronal connections in the brain. This chain is Protocadherin alpha-7, found in Pan troglodytes (Chimpanzee).